We begin with the raw amino-acid sequence, 327 residues long: Aspartate--ammonia ligase (327 aa).

It belongs to the class-II aminoacyl-tRNA synthetase family. AsnA subfamily.

It is found in the cytoplasm. The enzyme catalyses L-aspartate + NH4(+) + ATP = L-asparagine + AMP + diphosphate + H(+). The protein operates within amino-acid biosynthesis; L-asparagine biosynthesis; L-asparagine from L-aspartate (ammonia route): step 1/1. This is Aspartate--ammonia ligase from Bacillus cereus (strain ATCC 10987 / NRS 248).